Reading from the N-terminus, the 317-residue chain is tRNA dimethylallyltransferase (317 aa).

14–21 (GPTASGKT) contributes to the ATP binding site. Position 16-21 (16-21 (TASGKT)) interacts with substrate. Interaction with substrate tRNA regions lie at residues 39-42 (DSAL), 163-167 (QRIQR), and 248-253 (RCVGYR).

The protein belongs to the IPP transferase family. In terms of assembly, monomer. Requires Mg(2+) as cofactor.

The catalysed reaction is adenosine(37) in tRNA + dimethylallyl diphosphate = N(6)-dimethylallyladenosine(37) in tRNA + diphosphate. Functionally, catalyzes the transfer of a dimethylallyl group onto the adenine at position 37 in tRNAs that read codons beginning with uridine, leading to the formation of N6-(dimethylallyl)adenosine (i(6)A). This is tRNA dimethylallyltransferase from Paraburkholderia phymatum (strain DSM 17167 / CIP 108236 / LMG 21445 / STM815) (Burkholderia phymatum).